The following is a 185-amino-acid chain: Transcription termination/antitermination protein NusG (185 aa).

Residues 134-163 (VGQQVRIVEGPFATFSGEVEEVMSERNKVR) enclose the KOW domain.

The protein belongs to the NusG family.

In terms of biological role, participates in transcription elongation, termination and antitermination. The chain is Transcription termination/antitermination protein NusG from Treponema pallidum (strain Nichols).